A 282-amino-acid chain; its full sequence is Hydroxyethylthiazole kinase 2 (282 aa).

Met-44 is a binding site for substrate. The ATP site is built by Arg-120 and Ser-179. Residue Gly-206 coordinates substrate.

It belongs to the Thz kinase family. Mg(2+) is required as a cofactor.

The catalysed reaction is 5-(2-hydroxyethyl)-4-methylthiazole + ATP = 4-methyl-5-(2-phosphooxyethyl)-thiazole + ADP + H(+). It functions in the pathway cofactor biosynthesis; thiamine diphosphate biosynthesis; 4-methyl-5-(2-phosphoethyl)-thiazole from 5-(2-hydroxyethyl)-4-methylthiazole: step 1/1. Catalyzes the phosphorylation of the hydroxyl group of 4-methyl-5-beta-hydroxyethylthiazole (THZ). The sequence is that of Hydroxyethylthiazole kinase 2 from Methanosphaera stadtmanae (strain ATCC 43021 / DSM 3091 / JCM 11832 / MCB-3).